The primary structure comprises 224 residues: Deoxyribose-phosphate aldolase (224 aa).

The active-site Proton donor/acceptor is the D92. The active-site Schiff-base intermediate with acetaldehyde is K155. The active-site Proton donor/acceptor is K184.

This sequence belongs to the DeoC/FbaB aldolase family. DeoC type 1 subfamily.

It is found in the cytoplasm. It carries out the reaction 2-deoxy-D-ribose 5-phosphate = D-glyceraldehyde 3-phosphate + acetaldehyde. It participates in carbohydrate degradation; 2-deoxy-D-ribose 1-phosphate degradation; D-glyceraldehyde 3-phosphate and acetaldehyde from 2-deoxy-alpha-D-ribose 1-phosphate: step 2/2. In terms of biological role, catalyzes a reversible aldol reaction between acetaldehyde and D-glyceraldehyde 3-phosphate to generate 2-deoxy-D-ribose 5-phosphate. This chain is Deoxyribose-phosphate aldolase, found in Clostridium perfringens (strain 13 / Type A).